Consider the following 408-residue polypeptide: S-adenosylmethionine synthase (408 aa).

Histidine 16 serves as a coordination point for ATP. Mg(2+) is bound at residue aspartate 18. Glutamate 44 lines the K(+) pocket. 2 residues coordinate L-methionine: glutamate 57 and glutamine 100. The flexible loop stretch occupies residues 100 to 110 (QSPEINQGVSR). Residues 177–179 (DGK), aspartate 257, 263–264 (RK), alanine 280, and lysine 284 each bind ATP. Aspartate 257 serves as a coordination point for L-methionine. Residue lysine 288 participates in L-methionine binding.

This sequence belongs to the AdoMet synthase family. In terms of assembly, homotetramer; dimer of dimers. Mg(2+) is required as a cofactor. It depends on K(+) as a cofactor.

The protein resides in the cytoplasm. It carries out the reaction L-methionine + ATP + H2O = S-adenosyl-L-methionine + phosphate + diphosphate. It functions in the pathway amino-acid biosynthesis; S-adenosyl-L-methionine biosynthesis; S-adenosyl-L-methionine from L-methionine: step 1/1. Catalyzes the formation of S-adenosylmethionine (AdoMet) from methionine and ATP. The overall synthetic reaction is composed of two sequential steps, AdoMet formation and the subsequent tripolyphosphate hydrolysis which occurs prior to release of AdoMet from the enzyme. The polypeptide is S-adenosylmethionine synthase (Bifidobacterium animalis subsp. lactis (strain AD011)).